A 259-amino-acid chain; its full sequence is Sorbitol-6-phosphate 2-dehydrogenase (259 aa).

NAD(+) is bound at residue 4 to 33 (VAVVIGGGQTLGAFLCHGLAAEGYRVAVVD). Ser141 lines the substrate pocket. Tyr154 functions as the Proton acceptor in the catalytic mechanism.

This sequence belongs to the short-chain dehydrogenases/reductases (SDR) family. As to quaternary structure, homotetramer.

It catalyses the reaction D-sorbitol 6-phosphate + NAD(+) = beta-D-fructose 6-phosphate + NADH + H(+). Its pathway is carbohydrate metabolism; D-sorbitol degradation; D-fructose 6-phosphate from D-sorbitol 6-phosphate: step 1/1. The chain is Sorbitol-6-phosphate 2-dehydrogenase (srlD) from Escherichia coli (strain K12).